A 367-amino-acid polypeptide reads, in one-letter code: DNA polymerase IV (367 aa).

In terms of domain architecture, UmuC spans 14-198 (IIHIDMDAFF…LPIAKFHGVG (185 aa)). Positions 18 and 116 each coordinate Mg(2+). Residue Glu-117 is part of the active site.

This sequence belongs to the DNA polymerase type-Y family. As to quaternary structure, monomer. The cofactor is Mg(2+).

Its subcellular location is the cytoplasm. It carries out the reaction DNA(n) + a 2'-deoxyribonucleoside 5'-triphosphate = DNA(n+1) + diphosphate. Functionally, poorly processive, error-prone DNA polymerase involved in untargeted mutagenesis. Copies undamaged DNA at stalled replication forks, which arise in vivo from mismatched or misaligned primer ends. These misaligned primers can be extended by PolIV. Exhibits no 3'-5' exonuclease (proofreading) activity. May be involved in translesional synthesis, in conjunction with the beta clamp from PolIII. The polypeptide is DNA polymerase IV (Streptococcus thermophilus (strain ATCC BAA-491 / LMD-9)).